A 1394-amino-acid chain; its full sequence is DNA-directed RNA polymerase subunit beta'' (1394 aa).

The Zn(2+) site is built by cysteine 224, cysteine 295, cysteine 302, and cysteine 305.

It belongs to the RNA polymerase beta' chain family. RpoC2 subfamily. In terms of assembly, in plastids the minimal PEP RNA polymerase catalytic core is composed of four subunits: alpha, beta, beta', and beta''. When a (nuclear-encoded) sigma factor is associated with the core the holoenzyme is formed, which can initiate transcription. Zn(2+) is required as a cofactor.

The protein localises to the plastid. Its subcellular location is the chloroplast. The enzyme catalyses RNA(n) + a ribonucleoside 5'-triphosphate = RNA(n+1) + diphosphate. In terms of biological role, DNA-dependent RNA polymerase catalyzes the transcription of DNA into RNA using the four ribonucleoside triphosphates as substrates. This Cucumis sativus (Cucumber) protein is DNA-directed RNA polymerase subunit beta''.